Reading from the N-terminus, the 574-residue chain is Developmental and secondary metabolism regulator veA (574 aa).

Disordered stretches follow at residues methionine 1 to threonine 22, glutamate 39 to proline 60, arginine 255 to lysine 500, and arginine 513 to arginine 540. The Velvet domain occupies glycine 25 to arginine 230. The short motif at glutamate 39 to cysteine 44 is the Nuclear localization signal element. Composition is skewed to pro residues over residues arginine 314 to alanine 323 and proline 330 to histidine 341. Polar residues-rich tracts occupy residues proline 343–serine 353, histidine 385–glutamate 394, arginine 406–proline 415, and valine 448–threonine 458. Residues glutamine 457–alanine 498 are PEST. Low complexity-rich tracts occupy residues proline 459–serine 474 and serine 482–serine 493. Residues arginine 513 to proline 525 show a composition bias toward basic and acidic residues.

It belongs to the velvet family. VeA subfamily. As to quaternary structure, component of the heterotrimeric velvet complex composed of laeA, veA and velB; VeA acting as a bridging protein between laeA and velB.

The protein resides in the nucleus. The protein localises to the cytoplasm. In terms of biological role, component of the velvet transcription factor complex that controls sexual/asexual developmental ratio in response to light, promoting sexual development in the darkness while stimulating asexual sporulation under illumination. The velvet complex hat acts as a global regulator for secondary metabolite gene expression. Controls the expression of the cyclopiazonic acid, aflatrem, and aflatoxin gene clusters. Controls the expression of the sclerotium-specific pigment asparasone A gene cluster. Controls the expression of the aflavarin gene cluster. also controls the production of hydrolases and other extracellular proteins during growth on natural starch-based substrates. Regulates genes involved in the High Osmolarity Glycerol (HOG) signaling pathway. Required for the conidial and sclerotial density-dependent production. This is Developmental and secondary metabolism regulator veA from Aspergillus flavus (strain ATCC 200026 / FGSC A1120 / IAM 13836 / NRRL 3357 / JCM 12722 / SRRC 167).